A 409-amino-acid polypeptide reads, in one-letter code: Phosphatidylserine decarboxylase proenzyme, mitochondrial (409 aa).

A mitochondrion-targeting transit peptide spans 1–52; it reads MAASVCRPYVRSLPGVMPWRSSSCHYEYTAMHHFLGSFQKLPFEPFNTGARK. At 53–63 the chain is on the mitochondrial matrix side; that stretch reads IHTAPVRSLFL. Residues 64-82 form a helical membrane-spanning segment; that stretch reads LRPVPILLATGGGYAGYRQ. At 83–409 the chain is on the mitochondrial intermembrane side; it reads YEKYRDQKLE…IRFGEALGSL (327 aa). Residues Asp191, His267, and Ser378 each act as charge relay system; for autoendoproteolytic cleavage activity in the active site. Ser378 functions as the Schiff-base intermediate with substrate; via pyruvic acid; for decarboxylase activity in the catalytic mechanism. Ser378 carries the pyruvic acid (Ser); by autocatalysis modification.

This sequence belongs to the phosphatidylserine decarboxylase family. PSD-B subfamily. Eukaryotic type I sub-subfamily. As to quaternary structure, heterodimer of a large membrane-associated beta subunit and a small pyruvoyl-containing alpha subunit. The cofactor is pyruvate. In terms of processing, is synthesized initially as an inactive proenzyme. Formation of the active enzyme involves a self-maturation process in which the active site pyruvoyl group is generated from an internal serine residue via an autocatalytic post-translational modification. Two non-identical subunits are generated from the proenzyme in this reaction, and the pyruvate is formed at the N-terminus of the alpha chain, which is derived from the carboxyl end of the proenzyme. The autoendoproteolytic cleavage occurs by a canonical serine protease mechanism, in which the side chain hydroxyl group of the serine supplies its oxygen atom to form the C-terminus of the beta chain, while the remainder of the serine residue undergoes an oxidative deamination to produce ammonia and the pyruvoyl prosthetic group on the alpha chain. During this reaction, the Ser that is part of the protease active site of the proenzyme becomes the pyruvoyl prosthetic group, which constitutes an essential element of the active site of the mature decarboxylase.

It localises to the mitochondrion inner membrane. The protein resides in the cytoplasm. It is found in the lipid droplet. The catalysed reaction is a 1,2-diacyl-sn-glycero-3-phospho-L-serine + H(+) = a 1,2-diacyl-sn-glycero-3-phosphoethanolamine + CO2. It functions in the pathway phospholipid metabolism; phosphatidylethanolamine biosynthesis. Its function is as follows. Catalyzes the formation of phosphatidylethanolamine (PtdEtn) from phosphatidylserine (PtdSer). Plays a central role in phospholipid metabolism and in the interorganelle trafficking of phosphatidylserine. May be involved in lipid droplet biogenesis at the endoplasmic reticulum membrane. This chain is Phosphatidylserine decarboxylase proenzyme, mitochondrial, found in Cricetulus griseus (Chinese hamster).